The chain runs to 557 residues: Copine-6 (557 aa).

C2 domains follow at residues 1–127 and 134–263; these read MSDP…TKPL and TAGK…MQWD. Asp-167, Asp-173, Asp-229, Asp-231, and Asp-237 together coordinate Ca(2+). Positions 244 to 303 are linker region; sequence STFQEMQEGTANPGQEMQWDCINPKYRDKKKNYKSSGTVVLAQCTVEKVHTFLDYIMGGC. The region spanning 306 to 526 is the VWFA domain; the sequence is SFTVAIDFTA…ALAKCVLAEV (221 aa).

This sequence belongs to the copine family. Interacts (via second C2 domain) with OS9 (via C-terminus); this interaction occurs in a calcium-dependent manner in vitro. May interact with NECAB1. It depends on Ca(2+) as a cofactor. As to expression, expressed in the brain. Expressed in pyramidal cells, granule cells, and neurons in the dentate gyrus of the hippocampus and in granule cells of the olfactory bulb (at protein level). Expressed in pyramidal cells of the CA1-CA3 regions, in granule cells of the dentate gyrus, in granule cells of the olfactory bulbs, in the mitral cell layer and in neurons of the cerebral cortex layer II, brainstem and spinal cord. Not detected in glial cells.

The protein localises to the cytoplasm. Its subcellular location is the cell membrane. It is found in the endosome. The protein resides in the cytoplasmic vesicle. It localises to the clathrin-coated vesicle. The protein localises to the perikaryon. Its subcellular location is the cell projection. It is found in the dendrite. In terms of biological role, calcium-dependent phospholipid-binding protein that plays a role in calcium-mediated intracellular processes. Binds phospholipid membranes in a calcium-dependent manner. Plays a role in dendrite formation by melanocytes. The chain is Copine-6 from Mus musculus (Mouse).